Here is a 597-residue protein sequence, read N- to C-terminus: Arginine--tRNA ligase (597 aa).

Residues 138–148 carry the 'HIGH' region motif; the sequence is ANPTGPMHVGH.

It belongs to the class-I aminoacyl-tRNA synthetase family. In terms of assembly, monomer.

Its subcellular location is the cytoplasm. It carries out the reaction tRNA(Arg) + L-arginine + ATP = L-arginyl-tRNA(Arg) + AMP + diphosphate. The sequence is that of Arginine--tRNA ligase from Nitrobacter winogradskyi (strain ATCC 25391 / DSM 10237 / CIP 104748 / NCIMB 11846 / Nb-255).